A 370-amino-acid chain; its full sequence is Galactose-1-phosphate uridylyltransferase (370 aa).

Cys51 and Cys54 together coordinate Zn(2+). Residues Ala60 and 76–77 (NG) each bind UDP-alpha-D-glucose. His121 serves as a coordination point for Zn(2+). Asn166 lines the UDP-alpha-D-glucose pocket. Residue His177 coordinates Zn(2+). The active-site Tele-UMP-histidine intermediate is the His179. Gln181 contributes to the UDP-alpha-D-glucose binding site. Fe cation is bound by residues Glu195, His294, His311, and His313. Residues 326–329 (KFLV) and 331–332 (FE) each bind UDP-alpha-D-glucose.

This sequence belongs to the galactose-1-phosphate uridylyltransferase type 1 family. Homodimer. It depends on Zn(2+) as a cofactor.

The enzyme catalyses alpha-D-galactose 1-phosphate + UDP-alpha-D-glucose = alpha-D-glucose 1-phosphate + UDP-alpha-D-galactose. Its pathway is carbohydrate metabolism; galactose metabolism. This is Galactose-1-phosphate uridylyltransferase (GAL7) from Kluyveromyces lactis (strain ATCC 8585 / CBS 2359 / DSM 70799 / NBRC 1267 / NRRL Y-1140 / WM37) (Yeast).